The primary structure comprises 242 residues: tRNA pseudouridine synthase A (242 aa).

The active-site Nucleophile is Asp-51. Tyr-107 is a substrate binding site.

It belongs to the tRNA pseudouridine synthase TruA family. In terms of assembly, homodimer.

The catalysed reaction is uridine(38/39/40) in tRNA = pseudouridine(38/39/40) in tRNA. Formation of pseudouridine at positions 38, 39 and 40 in the anticodon stem and loop of transfer RNAs. The chain is tRNA pseudouridine synthase A from Helicobacter pylori (strain G27).